The primary structure comprises 417 residues: Serpin H1 (417 aa).

Positions 1–18 (MRSLLLLSAFCLLEAALA) are cleaved as a signal peptide. Position 94 is an N6-succinyllysine (Lys-94). N-linked (GlcNAc...) asparagine glycans are attached at residues Asn-120 and Asn-125. Ser-141 bears the Phosphoserine mark. The residue at position 206 (Lys-206) is an N6-acetyllysine. Lys-295 carries the N6-succinyllysine modification. Lys-318 is subject to N6-acetyllysine. A Prevents secretion from ER motif is present at residues 414–417 (RDEL).

This sequence belongs to the serpin family.

The protein resides in the endoplasmic reticulum lumen. In terms of biological role, binds specifically to collagen. Could be involved as a chaperone in the biosynthetic pathway of collagen. This chain is Serpin H1 (SERPINH1), found in Pongo abelii (Sumatran orangutan).